The primary structure comprises 143 residues: Large ribosomal subunit protein uL16 (143 aa).

A disordered region spans residues 1–26 (MSMALLPRRVKYRKSQRGSRKGNATR). The span at 8-20 (RRVKYRKSQRGSR) shows a compositional bias: basic residues.

This sequence belongs to the universal ribosomal protein uL16 family. As to quaternary structure, part of the 50S ribosomal subunit.

Binds 23S rRNA and is also seen to make contacts with the A and possibly P site tRNAs. The sequence is that of Large ribosomal subunit protein uL16 from Methylacidiphilum infernorum (isolate V4) (Methylokorus infernorum (strain V4)).